The sequence spans 438 residues: Na(+)/H(+) antiporter NhaA (438 aa).

Transmembrane regions (helical) follow at residues 23–43 (FGGI…NSFL), 62–82 (FFIG…LFFL), 104–124 (SFPV…YFFL), 133–153 (GFGI…MLLG), 162–182 (VFLI…IALF), 185–205 (TNLK…LAVL), 221–241 (VLLW…AVIL), 302–322 (FLAP…NAGV), 337–357 (LGVI…ITFI), 372–392 (WWHI…SMFI), and 410–430 (IAIL…LFAL).

This sequence belongs to the NhaA Na(+)/H(+) (TC 2.A.33) antiporter family.

The protein localises to the cell inner membrane. It carries out the reaction Na(+)(in) + 2 H(+)(out) = Na(+)(out) + 2 H(+)(in). Na(+)/H(+) antiporter that extrudes sodium in exchange for external protons. The polypeptide is Na(+)/H(+) antiporter NhaA (Helicobacter pylori (strain ATCC 700392 / 26695) (Campylobacter pylori)).